The following is an 85-amino-acid chain: Phosphocarrier protein HPr (85 aa).

Residues 1–85 (MYEKQVEITA…HLVALMDQLH (85 aa)) form the HPr domain. The active-site Pros-phosphohistidine intermediate is the His-15.

Belongs to the HPr family.

The protein localises to the cytoplasm. In terms of biological role, general (non sugar-specific) component of the phosphoenolpyruvate-dependent sugar phosphotransferase system (sugar PTS). This major carbohydrate active-transport system catalyzes the phosphorylation of incoming sugar substrates concomitantly with their translocation across the cell membrane. The phosphoryl group from phosphoenolpyruvate (PEP) is transferred to the phosphoryl carrier protein HPr by enzyme I. Phospho-HPr then transfers it to the PTS EIIA domain. This is Phosphocarrier protein HPr (ptsH) from Vibrio cholerae serotype O1 (strain ATCC 39315 / El Tor Inaba N16961).